The sequence spans 297 residues: Magnetosome protein MamB (297 aa).

At 1–12 (MKFENCRDCREE) the chain is on the cytoplasmic side. The segment at 1–214 (MKFENCRDCR…GLMDSSVDTE (214 aa)) is transmembrane domain (TMD). The helical transmembrane segment at 13 to 33 (VVWWAFTADICMTLFKGILGL) threads the bilayer. Residues 34–83 (MSGSVALVADSLHSGADVVASGVTQLSLKISNKPADERYPFGYGNIQYIS) are Lumenal-facing. The chain crosses the membrane as a helical span at residues 84 to 104 (SAIVGSLLLIGASFLMYGSVV). The Cytoplasmic portion of the chain corresponds to 105 to 112 (KLISGTYE). The helical transmembrane segment at 113–133 (APSIFAALGASVTVIVNELMY) threads the bilayer. Over 134-164 (RYQICVGNENNSPAIIANAWDNRSDAISSAA) the chain is Lumenal. Residues 165 to 185 (VMVGVIASVIGFPIADTIAAI) form a helical membrane-spanning segment. Topologically, residues 186–297 (GVSALVGHIG…PAPAAVTVRV (112 aa)) are cytoplasmic. A C-terminal domain (CTD) region spans residues 215–297 (LLQTAWQIAT…PAPAAVTVRV (83 aa)).

Belongs to the cation diffusion facilitator (CDF) transporter (TC 2.A.4) family. As to quaternary structure, forms homodimers via its C-terminal domain, may form higher order multimers that are sensitive to reducing agent. Probably interacts with MamE. Interacts with MamM via their C-terminal domains.

The protein resides in the cell inner membrane. Its subcellular location is the magnetosome membrane. In terms of biological role, plays a dual, essential role in magnetosome formation; required for magnetosome vesicle formation as well as biomineralization. Requires heterodimerization with MamM for stability. Probably binds and transports iron. One of 7 genes (mamLQBIEMO) able to induce magnetosome membrane biogenesis; coexpression of mamLQRBIEMO in a deletion of the 17 gene mamAB operon restores magnetosome vesicle formation but not magnetite biosynthesis. This Magnetospirillum gryphiswaldense (strain DSM 6361 / JCM 21280 / NBRC 15271 / MSR-1) protein is Magnetosome protein MamB.